A 193-amino-acid chain; its full sequence is Ribosome maturation factor RimM (193 aa).

Residues 112–193 (VDEYYWIDLI…CITVDWGLDF (82 aa)) form the PRC barrel domain.

This sequence belongs to the RimM family. As to quaternary structure, binds ribosomal protein uS19.

The protein resides in the cytoplasm. In terms of biological role, an accessory protein needed during the final step in the assembly of 30S ribosomal subunit, possibly for assembly of the head region. Essential for efficient processing of 16S rRNA. May be needed both before and after RbfA during the maturation of 16S rRNA. It has affinity for free ribosomal 30S subunits but not for 70S ribosomes. The chain is Ribosome maturation factor RimM from Methylibium petroleiphilum (strain ATCC BAA-1232 / LMG 22953 / PM1).